The sequence spans 424 residues: MSVDGRQAVIVVARLSGKGDLALLDELRKLVEAAGYAVAGELLQKSRYEDPKYNIGRGKVLELKRLVEEKKPLKVVFLNDLKPNQAYNLSKETGVEVIDRYELILEIFAKRAGSRESKLQIELAKLKRELSFAKEYINLAKRGELHGFLGGGKYAVDAYYAYVSMRISKIEEELRKIRKMKEERIARRVEAGLYTVALTGYTGAGKTTLFNVLTGENGYIDGKPFATLSTLSRRTYFHGFPVLVTDTIGFIDDLPDALVDAFYTTLRETLAADVILLVLDVSDTPAEIRRKLTASMEVLLNLGVPPTRILLVGNKIDKVSSAELEERERLLEDSGLRYTLISAARRIGIHELTQAVVEMLPEKVSATLALTREALAEDLRELLDRCRVREVVQGSDGKLLVVVEGRRDIVARLQARAGMGLVDG.

The region spanning 194-364 (YTVALTGYTG…AVVEMLPEKV (171 aa)) is the Hflx-type G domain. Residues 200–207 (GYTGAGKT), 225–229 (FATLS), 246–249 (DTIG), 314–317 (NKID), and 342–344 (SAA) contribute to the GTP site. 2 residues coordinate Mg(2+): threonine 207 and threonine 227.

It belongs to the TRAFAC class OBG-HflX-like GTPase superfamily. HflX GTPase family. As to quaternary structure, monomer. Associates with the 50S ribosomal subunit. Mg(2+) serves as cofactor.

Its subcellular location is the cytoplasm. Functionally, GTPase that associates with the 50S ribosomal subunit and may have a role during protein synthesis or ribosome biogenesis. This chain is GTPase HflX, found in Thermofilum pendens (strain DSM 2475 / Hrk 5).